The primary structure comprises 503 residues: Beta-amylase Tri a 17 (503 aa).

D51, H91, and D99 together coordinate substrate. The active-site Proton donor is E184. The substrate site is built by K293, H298, and T340. The active-site Proton acceptor is the E378. Substrate-binding positions include 379 to 380 and R418; that span reads NA.

It belongs to the glycosyl hydrolase 14 family.

The catalysed reaction is Hydrolysis of (1-&gt;4)-alpha-D-glucosidic linkages in polysaccharides so as to remove successive maltose units from the non-reducing ends of the chains.. This Triticum aestivum (Wheat) protein is Beta-amylase Tri a 17 (BMY1).